A 231-amino-acid polypeptide reads, in one-letter code: Large ribosomal subunit protein uL1 (231 aa).

This sequence belongs to the universal ribosomal protein uL1 family. Part of the 50S ribosomal subunit.

Binds directly to 23S rRNA. The L1 stalk is quite mobile in the ribosome, and is involved in E site tRNA release. Its function is as follows. Protein L1 is also a translational repressor protein, it controls the translation of the L11 operon by binding to its mRNA. The chain is Large ribosomal subunit protein uL1 from Neisseria gonorrhoeae (strain ATCC 700825 / FA 1090).